The primary structure comprises 232 residues: Large ribosomal subunit protein uL1 (232 aa).

The protein belongs to the universal ribosomal protein uL1 family. Part of the 50S ribosomal subunit.

Binds directly to 23S rRNA. The L1 stalk is quite mobile in the ribosome, and is involved in E site tRNA release. Its function is as follows. Protein L1 is also a translational repressor protein, it controls the translation of the L11 operon by binding to its mRNA. This chain is Large ribosomal subunit protein uL1, found in Azorhizobium caulinodans (strain ATCC 43989 / DSM 5975 / JCM 20966 / LMG 6465 / NBRC 14845 / NCIMB 13405 / ORS 571).